The primary structure comprises 101 residues: Small ribosomal subunit protein uS14 (101 aa).

It belongs to the universal ribosomal protein uS14 family. In terms of assembly, part of the 30S ribosomal subunit. Contacts proteins S3 and S10.

Functionally, binds 16S rRNA, required for the assembly of 30S particles and may also be responsible for determining the conformation of the 16S rRNA at the A site. This chain is Small ribosomal subunit protein uS14, found in Psychrobacter arcticus (strain DSM 17307 / VKM B-2377 / 273-4).